Consider the following 179-residue polypeptide: ADP-ribosylation factor-like protein 5B (179 aa).

A lipid anchor (N-myristoyl glycine) is attached at Gly-2. Residues 23 to 30 (GLDNAGKT), 66 to 70 (DIGGQ), 125 to 128 (NKQD), and Ala-159 contribute to the GTP site.

Belongs to the small GTPase superfamily. Arf family.

Its function is as follows. Binds and exchanges GTP and GDP. The sequence is that of ADP-ribosylation factor-like protein 5B (Arl5b) from Mus musculus (Mouse).